The primary structure comprises 301 residues: tRNA dimethylallyltransferase (301 aa).

8–15 lines the ATP pocket; it reads GPTAVGKT. Position 10 to 15 (10 to 15) interacts with substrate; the sequence is TAVGKT. Positions 33 to 36 are interaction with substrate tRNA; the sequence is DSRQ.

The protein belongs to the IPP transferase family. As to quaternary structure, monomer. Mg(2+) serves as cofactor.

It catalyses the reaction adenosine(37) in tRNA + dimethylallyl diphosphate = N(6)-dimethylallyladenosine(37) in tRNA + diphosphate. Catalyzes the transfer of a dimethylallyl group onto the adenine at position 37 in tRNAs that read codons beginning with uridine, leading to the formation of N6-(dimethylallyl)adenosine (i(6)A). The protein is tRNA dimethylallyltransferase of Thermosipho melanesiensis (strain DSM 12029 / CIP 104789 / BI429).